The sequence spans 85 residues: UPF0298 protein SUB0431 (85 aa).

The protein belongs to the UPF0298 family.

It localises to the cytoplasm. The chain is UPF0298 protein SUB0431 from Streptococcus uberis (strain ATCC BAA-854 / 0140J).